Reading from the N-terminus, the 457-residue chain is Putative methyltransferase MT1451 (457 aa).

S-adenosyl-L-methionine-binding positions include 276-282 (CAGPGGK), glutamate 301, aspartate 325, and aspartate 341. Catalysis depends on cysteine 394, which acts as the Nucleophile.

Belongs to the class I-like SAM-binding methyltransferase superfamily. RsmB/NOP family.

May act as RNA methyltransferase. This is Putative methyltransferase MT1451 from Mycobacterium tuberculosis (strain CDC 1551 / Oshkosh).